A 28-amino-acid chain; its full sequence is GLKDWWNKHKDKIIAVAKEMGKAGLQAA.

An Alanine amide modification is found at A28.

As to expression, expressed by the venom gland.

Its subcellular location is the secreted. Functionally, shows a broad spectrum of activity against both Gram-positive and Gram-negative bacteria. Also has antimicrobial activity against S.cerevisiae. Has insecticidal and non-hemolytic activity. This chain is U1-poneritoxin-Da4a, found in Dinoponera australis (Giant neotropical hunting ant).